Reading from the N-terminus, the 145-residue chain is Flagellar assembly factor FliW (145 aa).

Belongs to the FliW family. Interacts with translational regulator CsrA and flagellin(s).

Its subcellular location is the cytoplasm. Functionally, acts as an anti-CsrA protein, binds CsrA and prevents it from repressing translation of its target genes, one of which is flagellin. Binds to flagellin and participates in the assembly of the flagellum. The sequence is that of Flagellar assembly factor FliW from Clostridium kluyveri (strain NBRC 12016).